We begin with the raw amino-acid sequence, 322 residues long: Secretion system apparatus protein SsaQ (322 aa).

Belongs to the FliN/MopA/SpaO family.

Functionally, part of a type III secretion system. This Salmonella typhimurium (strain LT2 / SGSC1412 / ATCC 700720) protein is Secretion system apparatus protein SsaQ (ssaQ).